A 1008-amino-acid chain; its full sequence is Envelopment polyprotein (1008 aa).

An N-terminal signal peptide occupies residues 1 to 17 (MVRTYLLLLLLCGPATP). At 18–394 (FFNHLMDVTR…NWANIHCFSK (377 aa)) the chain is on the lumenal side. 3 N-linked (GlcNAc...) asparagine; by host glycosylation sites follow: Asn-34, Asn-70, and Asn-108. Disulfide bonds link Cys-138-Cys-269, Cys-156-Cys-166, Cys-206-Cys-247, Cys-216-Cys-226, Cys-233-Cys-238, Cys-292-Cys-295, Cys-299-Cys-368, and Cys-319-Cys-324. Asn-208 is a glycosylation site (N-linked (GlcNAc...) asparagine; by host). The chain crosses the membrane as a helical span at residues 395–415 (EQVLILVAVSSLCILLLASVL). At 416–496 (RALKVIATFT…VRQKMFNLTR (81 aa)) the chain is on the cytoplasmic side. Residues 419–465 (KVIATFTWKIIKPFWWILSLLCRTCSKRLNKRAERLKESIHSLEEGL) form a golgi retention signal region. The tract at residues 461-465 (LEEGL) is important for correct targeting of the glycoproteins to the Golgi complex but not for heterodimerization. The interval 497 to 513 (LSPVVVGMLCLACPVES) is internal signal sequence for glycoprotein C. 12 cysteine pairs are disulfide-bonded: Cys-514–Cys-555, Cys-527–Cys-537, Cys-580–Cys-677, Cys-595–Cys-789, Cys-601–Cys-650, Cys-607–Cys-657, Cys-612–Cys-639, Cys-643–Cys-648, Cys-728–Cys-742, Cys-758–Cys-771, Cys-851–Cys-924, and Cys-861–Cys-864. Residues 514-977 (CSDSISVTAS…GWFKASWLRA (464 aa)) are Lumenal-facing. The segment at 601–607 (CHLMGAC) is fusion loop. The segment at 644 to 655 (GGALCQCFNMRP) is fusion loop. Asn-691 and Asn-696 each carry an N-linked (GlcNAc...) asparagine; by host glycan. N-linked (GlcNAc...) asparagine; by host glycosylation is found at Asn-912 and Asn-949. Residues 978–998 (IWAILGGTVSLIIGVVIIYMV) traverse the membrane as a helical segment. Over 999 to 1008 (FTLCLKVKKS) the chain is Cytoplasmic.

The protein belongs to the phlebovirus envelope glycoprotein family. In terms of assembly, homodimer. Heterodimer with glycoprotein C. Homotrimer (postfusion). Heterodimer with glycoprotein N. Homotrimer (postfusion). In terms of processing, specific enzymatic cleavages in vivo yield mature proteins including glycoprotein C and glycoprotein N. Post-translationally, the cytoplasmic tail is Palmitoylated. Glycosylated. Contains principally poly-N-acetyllactosamine glycans. In terms of processing, glycosylated. Contains principally oligomannose-type glycans that can attach to host CD209/DC-SIGN. Post-translationally, palmitoylated.

It localises to the virion membrane. Its subcellular location is the host Golgi apparatus membrane. It is found in the host endoplasmic reticulum membrane. Structural component of the virion that interacts with glycoprotein C. It shields the hydrophobic fusion loops of the glycoprotein C, preventing premature fusion. The glycoprotein protrusions are arranged on an icosahedral lattice, with T=12 triangulation. They are able to attach the virion to the host cell receptor CD209/DC-SIGN and to promote fusion of membranes with the late endosome after endocytosis of the virion. Plays a role in the packaging of ribonucleoproteins during virus assembly. In terms of biological role, structural component of the virion that interacts with glycoprotein N. Acts as a class II fusion protein that is activated upon acidification and subsequent repositioning of the glycoprotein N. The glycoprotein protrusions are arranged on an icosahedral lattice, with T=12 triangulation. They are able to attach the virion to the host cell receptor CD209/DC-SIGN and to promote fusion of membranes with the late endosome after endocytosis of the virion. The chain is Envelopment polyprotein (GP) from Homo sapiens (Human).